The sequence spans 419 residues: GTPase Obg (419 aa).

The 158-residue stretch at 1–158 (MFVDQARIFV…KWIRLELKLL (158 aa)) folds into the Obg domain. Residues 159–327 (ADVGLVGFPN…LMGKTYALLQ (169 aa)) form the OBG-type G domain. GTP contacts are provided by residues 165 to 172 (GFPNAGKS), 190 to 194 (FTTLV), 212 to 215 (DIPG), 282 to 285 (NKMD), and 308 to 310 (SAV). Residues Ser-172 and Thr-192 each contribute to the Mg(2+) site. The region spanning 342–419 (RRFEEELPFK…IKDFEFEFTE (78 aa)) is the OCT domain.

This sequence belongs to the TRAFAC class OBG-HflX-like GTPase superfamily. OBG GTPase family. In terms of assembly, monomer. Mg(2+) serves as cofactor.

The protein resides in the cytoplasm. Its function is as follows. An essential GTPase which binds GTP, GDP and possibly (p)ppGpp with moderate affinity, with high nucleotide exchange rates and a fairly low GTP hydrolysis rate. Plays a role in control of the cell cycle, stress response, ribosome biogenesis and in those bacteria that undergo differentiation, in morphogenesis control. The chain is GTPase Obg from Syntrophomonas wolfei subsp. wolfei (strain DSM 2245B / Goettingen).